Here is a 507-residue protein sequence, read N- to C-terminus: ATP synthase subunit beta (507 aa).

A disordered region spans residues 1 to 22 (MSGLASKAKSRVKSSKGKNSTN). 183 to 190 (GGAGVGKT) is an ATP binding site.

It belongs to the ATPase alpha/beta chains family. In terms of assembly, F-type ATPases have 2 components, CF(1) - the catalytic core - and CF(0) - the membrane proton channel. CF(1) has five subunits: alpha(3), beta(3), gamma(1), delta(1), epsilon(1). CF(0) has three main subunits: a(1), b(2) and c(9-12). The alpha and beta chains form an alternating ring which encloses part of the gamma chain. CF(1) is attached to CF(0) by a central stalk formed by the gamma and epsilon chains, while a peripheral stalk is formed by the delta and b chains.

It is found in the cell inner membrane. It carries out the reaction ATP + H2O + 4 H(+)(in) = ADP + phosphate + 5 H(+)(out). Functionally, produces ATP from ADP in the presence of a proton gradient across the membrane. The catalytic sites are hosted primarily by the beta subunits. This chain is ATP synthase subunit beta, found in Ehrlichia chaffeensis (strain ATCC CRL-10679 / Arkansas).